We begin with the raw amino-acid sequence, 406 residues long: Riboflavin biosynthesis protein RibBA (406 aa).

Residues 1-209 (MSEREEFKFN…IADLIKYRLR (209 aa)) are DHBP synthase. D-ribulose 5-phosphate is bound by residues 33 to 34 (RE), aspartate 38, 148 to 152 (RAGHT), and glutamate 172. Glutamate 34 contributes to the Mg(2+) binding site. Histidine 151 contacts Mg(2+). A GTP cyclohydrolase II region spans residues 210–406 (RETLVEKVAS…VKKDKLGHMF (197 aa)). GTP is bound at residue 260 to 264 (RVHSE). Residues cysteine 265, cysteine 276, and cysteine 278 each contribute to the Zn(2+) site. GTP is bound by residues glutamine 281, 304-306 (EGR), and threonine 326. Catalysis depends on aspartate 338, which acts as the Proton acceptor; for GTP cyclohydrolase activity. Arginine 340 functions as the Nucleophile; for GTP cyclohydrolase activity in the catalytic mechanism. Threonine 361 and lysine 366 together coordinate GTP.

The protein in the N-terminal section; belongs to the DHBP synthase family. It in the C-terminal section; belongs to the GTP cyclohydrolase II family. Mg(2+) serves as cofactor. It depends on Mn(2+) as a cofactor. The cofactor is Zn(2+).

The enzyme catalyses D-ribulose 5-phosphate = (2S)-2-hydroxy-3-oxobutyl phosphate + formate + H(+). The catalysed reaction is GTP + 4 H2O = 2,5-diamino-6-hydroxy-4-(5-phosphoribosylamino)-pyrimidine + formate + 2 phosphate + 3 H(+). It functions in the pathway cofactor biosynthesis; riboflavin biosynthesis; 2-hydroxy-3-oxobutyl phosphate from D-ribulose 5-phosphate: step 1/1. The protein operates within cofactor biosynthesis; riboflavin biosynthesis; 5-amino-6-(D-ribitylamino)uracil from GTP: step 1/4. Catalyzes the conversion of D-ribulose 5-phosphate to formate and 3,4-dihydroxy-2-butanone 4-phosphate. In terms of biological role, catalyzes the conversion of GTP to 2,5-diamino-6-ribosylamino-4(3H)-pyrimidinone 5'-phosphate (DARP), formate and pyrophosphate. The sequence is that of Riboflavin biosynthesis protein RibBA from Aquifex aeolicus (strain VF5).